The sequence spans 683 residues: Kinesin-like protein KIF2B (683 aa).

T125 bears the Phosphothreonine; by PLK1 mark. Positions 141–176 (LMTQRKSACLREIEKLQKQRERRRRLHREIRAQRAR) form a coiled coil. The residue at position 204 (S204) is a Phosphoserine; by PLK1. Residues 213–543 (RICVCVRKRP…LRYANRVKEI (331 aa)) form the Kinesin motor domain. ATP is bound at residue 303–310 (GQTGSGKT). A coiled-coil region spans residues 640–672 (QLLSILEKKIDILTEIRRKLKLLQADIQKENRH).

Belongs to the TRAFAC class myosin-kinesin ATPase superfamily. Kinesin family. MCAK/KIF2 subfamily. Post-translationally, phosphorylation at Thr-125 by PLK1 is required for activity in the correction of kinetochore-microtubules attachment errors, while phosphorylation at Ser-204 also by PLK1 is required for the kinetochore localization and activity in prometaphase.

The protein resides in the cytoplasm. The protein localises to the cytoskeleton. It localises to the microtubule organizing center. It is found in the centrosome. Its subcellular location is the spindle. The protein resides in the chromosome. The protein localises to the centromere. It localises to the kinetochore. Its function is as follows. Plus end-directed microtubule-dependent motor required for spindle assembly and chromosome movement during mitosis. Has microtubule depolymerization activity. Plays a role in chromosome congression. This Bos taurus (Bovine) protein is Kinesin-like protein KIF2B.